Here is a 915-residue protein sequence, read N- to C-terminus: MAPPFTDDPESQRPSTSRLSQDSLSSVSTTSLVFDRIQEEMDRDPSASRSARRDLLPATKDEGDFDENASETGAFLGPPGVPLQRQPMDRGFRRILIIIGAVFVGAWLAGLGIFVLSGSYKHESDSEHDPDANSRGSGKAVTMDQVFGGFWSARSHSISWIADPDGGDGLLLEVNTANGYLVVEDVRADKESTDTNAGQTADTQPAKPRVLMRDPYFMYHGEIKRPDWNEPSPDLKKVLLAVKREKNWRHSFQATYFILDVETAQVQPLVPDNVNAKVQLANWSPTSDAISFTMDNNIYIRRLNQANDVVQITKDGGPEYFYGIPDWVYEEEVFAGRSATWWSDDGKYLAFLRTNETAVPEYAIEYYIQRPSGKKPAVGEEAYPEIRKIKYPKPGAHNPVVDVQYYDVSKGDVFSISAPDEFPDHDRIISNVLWAGNKVLLKQSNRIGDFLKVILVDPSQREAKIVNSINIAEIDGGWFEISHTMTYIPADPSKGRQQDGYVDTVIHEGYEHIGYFTPIDNPKPIMLTSGSWEVEDAPSAVDLNNNLVYFVATKESSIQRHVYSVKLDGTNLTPLTNTSSEGYYTVSFSSRSGFALLSYKGPKIPYQKVISTPSIPIQFSRTIEDNADLADKAKKHELPILKYGTLQLPNGISVNYLERRPPHFNPKKKYPILFQQYSGPKSQTVTKKFAVDFQSYVASSLGYLVVTIDPRGTGFLGRQHRVVVRSQLGVLEAQDHIAAAKHYSSLPYVDPSRLAIWGWSYGGFQTLKTLEVDAGDTFSYGMAVAPVTDWRFYDSIYTERYMRLPQDNTAGYDASAVRNATALGMNKRFLIMHGSADDNVHFQNSLKLLDYLDLAGIENYDVHVFPDSDHSIAFHGANRMVYDRLNNWLVNAFNGEWLKIADPKPIDTKKRRHVS.

The segment at 1 to 82 (MAPPFTDDPE…GAFLGPPGVP (82 aa)) is disordered. At 1–94 (MAPPFTDDPE…RQPMDRGFRR (94 aa)) the chain is on the cytoplasmic side. A compositionally biased stretch (low complexity) spans 15-32 (STSRLSQDSLSSVSTTSL). A compositionally biased stretch (basic and acidic residues) spans 36-62 (RIQEEMDRDPSASRSARRDLLPATKDE). A helical; Signal-anchor for type II membrane protein transmembrane segment spans residues 95 to 115 (ILIIIGAVFVGAWLAGLGIFV). Residues 116 to 915 (LSGSYKHESD…IDTKKRRHVS (800 aa)) are Vacuolar-facing. 2 N-linked (GlcNAc...) asparagine glycosylation sites follow: N355 and N577. S760 serves as the catalytic Charge relay system. Residue N819 is glycosylated (N-linked (GlcNAc...) asparagine). Residues D837 and H870 each act as charge relay system in the active site.

The protein belongs to the peptidase S9B family.

The protein resides in the vacuole membrane. The enzyme catalyses Release of an N-terminal dipeptide, Xaa-Yaa-|-Zaa-, from a polypeptide, preferentially when Yaa is Pro, provided Zaa is neither Pro nor hydroxyproline.. Type IV dipeptidyl-peptidase which removes N-terminal dipeptides sequentially from polypeptides having unsubstituted N-termini provided that the penultimate residue is proline. The polypeptide is Probable dipeptidyl-aminopeptidase B (DAPB) (Metarhizium robertsii (strain ARSEF 23 / ATCC MYA-3075) (Metarhizium anisopliae (strain ARSEF 23))).